The following is a 613-amino-acid chain: Laccase 1 (613 aa).

The signal sequence occupies residues 1–20 (MSRFARLLLIVALFFTNAWA). Plastocyanin-like domains follow at residues 29–142 (ITWK…IRPK) and 171–359 (YLVV…MRIP). Asn74 carries an N-linked (GlcNAc...) asparagine glycan. Residues His78, His80, His122, and His124 each coordinate Cu cation. N-linked (GlcNAc...) asparagine glycans are attached at residues Asn256, Asn279, Asn444, Asn468, and Asn484. The region spanning 468 to 598 (NATRDTENDG…GGMGIAILDG (131 aa)) is the Plastocyanin-like 3 domain. Residues His506, His509, and His511 each coordinate Cu cation. An N-linked (GlcNAc...) asparagine glycan is attached at Asn526. His580, Cys581, His582, and His586 together coordinate Cu cation.

This sequence belongs to the multicopper oxidase family. Cu cation is required as a cofactor.

Its subcellular location is the cell surface. It participates in pigment biosynthesis. In terms of biological role, laccase; part of the Pks1 gene cluster that mediates the biosynthesis of an anthraquinone derivative pigment that contributes to conidial pigmentation that provides protection from UV radiation, heat and cold stress. The polyketide synthase Pks1 produces 1-acetyl-2,4,6,8-tetrahydroxy-9,10-anthraquinone though condensation of acetyl-CoA with malonyl-CoA. The dehydratase EthD and the laccase Mlac1 further convert the anthraquinone derivative into the final conidial pigment. In Metarhizium robertsii (strain ARSEF 23 / ATCC MYA-3075) (Metarhizium anisopliae (strain ARSEF 23)), this protein is Laccase 1.